A 468-amino-acid chain; its full sequence is ATP synthase subunit beta (468 aa).

155–162 (GGAGVGKT) is a binding site for ATP.

This sequence belongs to the ATPase alpha/beta chains family. As to quaternary structure, F-type ATPases have 2 components, CF(1) - the catalytic core - and CF(0) - the membrane proton channel. CF(1) has five subunits: alpha(3), beta(3), gamma(1), delta(1), epsilon(1). CF(0) has three main subunits: a(1), b(2) and c(9-12). The alpha and beta chains form an alternating ring which encloses part of the gamma chain. CF(1) is attached to CF(0) by a central stalk formed by the gamma and epsilon chains, while a peripheral stalk is formed by the delta and b chains.

Its subcellular location is the cell membrane. It carries out the reaction ATP + H2O + 4 H(+)(in) = ADP + phosphate + 5 H(+)(out). Produces ATP from ADP in the presence of a proton gradient across the membrane. The catalytic sites are hosted primarily by the beta subunits. The protein is ATP synthase subunit beta of Streptococcus pneumoniae (strain CGSP14).